The primary structure comprises 432 residues: 3-phosphoshikimate 1-carboxyvinyltransferase (432 aa).

The 3-phosphoshikimate site is built by Lys22, Ser23, and Arg27. Lys22 provides a ligand contact to phosphoenolpyruvate. Phosphoenolpyruvate contacts are provided by Gly96 and Arg127. The 3-phosphoshikimate site is built by Ser173, Ser174, Gln175, Ser201, Asp316, Asn339, and Lys343. Gln175 serves as a coordination point for phosphoenolpyruvate. Asp316 (proton acceptor) is an active-site residue. Phosphoenolpyruvate is bound by residues Arg347, Arg391, and Lys416.

The protein belongs to the EPSP synthase family. As to quaternary structure, monomer.

Its subcellular location is the cytoplasm. It carries out the reaction 3-phosphoshikimate + phosphoenolpyruvate = 5-O-(1-carboxyvinyl)-3-phosphoshikimate + phosphate. It functions in the pathway metabolic intermediate biosynthesis; chorismate biosynthesis; chorismate from D-erythrose 4-phosphate and phosphoenolpyruvate: step 6/7. Functionally, catalyzes the transfer of the enolpyruvyl moiety of phosphoenolpyruvate (PEP) to the 5-hydroxyl of shikimate-3-phosphate (S3P) to produce enolpyruvyl shikimate-3-phosphate and inorganic phosphate. In Actinobacillus pleuropneumoniae serotype 5b (strain L20), this protein is 3-phosphoshikimate 1-carboxyvinyltransferase.